A 335-amino-acid polypeptide reads, in one-letter code: Succinylglutamate desuccinylase (335 aa).

Zn(2+) is bound by residues His59, Glu62, and His151. Residue Glu215 is part of the active site.

The protein belongs to the AspA/AstE family. Succinylglutamate desuccinylase subfamily. Zn(2+) is required as a cofactor.

The catalysed reaction is N-succinyl-L-glutamate + H2O = L-glutamate + succinate. It participates in amino-acid degradation; L-arginine degradation via AST pathway; L-glutamate and succinate from L-arginine: step 5/5. In terms of biological role, transforms N(2)-succinylglutamate into succinate and glutamate. This Pseudomonas syringae pv. tomato (strain ATCC BAA-871 / DC3000) protein is Succinylglutamate desuccinylase.